Reading from the N-terminus, the 316-residue chain is Thymidylate synthase (316 aa).

Residues Arg23 and 178 to 179 (RR) each bind dUMP. Cys198 (nucleophile) is an active-site residue. DUMP-binding positions include 218 to 221 (RSGD), Asn229, and 259 to 261 (HIY). Asp221 contributes to the (6R)-5,10-methylene-5,6,7,8-tetrahydrofolate binding site. (6R)-5,10-methylene-5,6,7,8-tetrahydrofolate is bound at residue Ala315.

This sequence belongs to the thymidylate synthase family. Bacterial-type ThyA subfamily. Homodimer.

The protein resides in the cytoplasm. The enzyme catalyses dUMP + (6R)-5,10-methylene-5,6,7,8-tetrahydrofolate = 7,8-dihydrofolate + dTMP. It functions in the pathway pyrimidine metabolism; dTTP biosynthesis. Functionally, catalyzes the reductive methylation of 2'-deoxyuridine-5'-monophosphate (dUMP) to 2'-deoxythymidine-5'-monophosphate (dTMP) while utilizing 5,10-methylenetetrahydrofolate (mTHF) as the methyl donor and reductant in the reaction, yielding dihydrofolate (DHF) as a by-product. This enzymatic reaction provides an intracellular de novo source of dTMP, an essential precursor for DNA biosynthesis. This Lactiplantibacillus plantarum (strain ATCC BAA-793 / NCIMB 8826 / WCFS1) (Lactobacillus plantarum) protein is Thymidylate synthase.